Consider the following 186-residue polypeptide: Ribosome-recycling factor (186 aa).

It belongs to the RRF family.

It is found in the cytoplasm. Responsible for the release of ribosomes from messenger RNA at the termination of protein biosynthesis. May increase the efficiency of translation by recycling ribosomes from one round of translation to another. In Burkholderia ambifaria (strain ATCC BAA-244 / DSM 16087 / CCUG 44356 / LMG 19182 / AMMD) (Burkholderia cepacia (strain AMMD)), this protein is Ribosome-recycling factor.